Consider the following 693-residue polypeptide: MWPQPYLPPHPMMLEESRQNKLAAAKKKLKEYQQRKSPGIPAGAKTKKKKTDSSPETTTSGGGHSPGDSQYQELAVALESSSVTINQLNENIESLKQQKKQVEHQLEEAKKTNNEIHKAQMEQLETINILTLEKADLKTTLYHTKRAARHFEEESKDLAGRLQYSLQRIQELERALSAVSTQQQEEDRSSSCREAVLQRRLQQTIKERALLNAHVTQVTESLKQVQLERDEYAKHIKGERARWQERMWKMSVEARTLKEEKKRDIHRIQELERSLSELKNQMAEPPSLAPPAVTSVVEQLQDEAKHLRQEVEGLEGKLQSQVENNQALSLLSKEQKQRLQEQEEMLREQEAQRVREQERLCEQNERLREQQKTLQEQGERLRKQEQRLRKQEERLRKEEERLQKQEKRLWDQEERLWKKEERLQKQEERLALSQNHKLDKQLAEPQCSFEDLNNEKKSALQLEQQVKELQEKLDEEHLEAASQRNQQLETQLSLVALPGEGDGGQHLDSEEEEAPRPTPNIPEDLESREATSSFMDLPKEKADGTEQVERRELGFVQPSGVTDGMRESFTVYESQGAVPNTRHQEMEDVIRLAQKEEEMKVKLLELQELVLPLVGNHEGHGKFLIAAQNPADEPTPGAPAPQELGAAGEQDDFYEVSLDNNVEPAPGAAREGSPHDNPPVQQIVQLSPVMQDT.

Disordered regions lie at residues 20 to 71 (NKLA…DSQY), 497 to 547 (LPGE…GTEQ), and 629 to 693 (NPAD…MQDT). The stretch at 73–611 (ELAVALESSS…KLLELQELVL (539 aa)) forms a coiled coil. The span at 537–547 (LPKEKADGTEQ) shows a compositional bias: basic and acidic residues. Polar residues predominate over residues 679 to 693 (PVQQIVQLSPVMQDT).

The protein belongs to the GOLGA6 family.

This is Golgin subfamily A member 6C (GOLGA6C) from Homo sapiens (Human).